Consider the following 97-residue polypeptide: Vitelline membrane protein 15a-2 (97 aa).

Residues 1–19 (MNKIIAALVLFTAVIGALA) form the signal peptide. The required for binding to the gut receptor stretch occupies residues 20-23 (DYPA). The interval 26–46 (PPPPKPYHAPPPPPYHAPPHH) is disordered. The region spanning 61-97 (KAPAAKCGANLLVGCAPSVAHVPCVPVHPHPPPPAHY) is the VM domain.

The protein belongs to the vitelline membrane protein family. Expressed in the anterior region of the follicle cells.

The protein localises to the secreted. Functionally, has an oostatic activity. Inhibits trypsin biosynthesis in the midgut epithelial cells which indirectly reduces the vitellogenin concentration in the hemolymph resulting in inhibition of oocyte development. In Aedes aegypti (Yellowfever mosquito), this protein is Vitelline membrane protein 15a-2 (15a-2).